Here is a 195-residue protein sequence, read N- to C-terminus: CASP-like protein 1B2 (195 aa).

Over Met-1 to Leu-25 the chain is Cytoplasmic. A helical membrane pass occupies residues Ile-26 to Ile-46. At Met-47–Pro-78 the chain is on the extracellular side. The chain crosses the membrane as a helical span at residues Ala-79 to Val-99. The Cytoplasmic segment spans residues Thr-100–His-114. A helical transmembrane segment spans residues Leu-115–Ala-135. Residues Gln-136–His-160 are Extracellular-facing. A helical membrane pass occupies residues Gly-161–Leu-181. At Ser-182–Gln-195 the chain is on the cytoplasmic side.

It belongs to the Casparian strip membrane proteins (CASP) family. In terms of assembly, homodimer and heterodimers.

It localises to the cell membrane. The polypeptide is CASP-like protein 1B2 (Oryza sativa subsp. indica (Rice)).